The sequence spans 200 residues: uncharacterized protein (200 aa).

The helical transmembrane segment at 7–29 (FFFLFSFISHAMMLTGLIGSSSF) threads the bilayer.

The protein localises to the membrane. This is an uncharacterized protein from Saccharomyces cerevisiae (strain ATCC 204508 / S288c) (Baker's yeast).